Here is a 400-residue protein sequence, read N- to C-terminus: Tryptophan synthase beta chain (400 aa).

N6-(pyridoxal phosphate)lysine is present on Lys-92.

It belongs to the TrpB family. As to quaternary structure, tetramer of two alpha and two beta chains. It depends on pyridoxal 5'-phosphate as a cofactor.

It catalyses the reaction (1S,2R)-1-C-(indol-3-yl)glycerol 3-phosphate + L-serine = D-glyceraldehyde 3-phosphate + L-tryptophan + H2O. Its pathway is amino-acid biosynthesis; L-tryptophan biosynthesis; L-tryptophan from chorismate: step 5/5. Its function is as follows. The beta subunit is responsible for the synthesis of L-tryptophan from indole and L-serine. The protein is Tryptophan synthase beta chain of Neisseria meningitidis serogroup A / serotype 4A (strain DSM 15465 / Z2491).